The chain runs to 443 residues: MRSSRYFLPVLKEAPSDAQIVSHQLMLRAGMIRQEAAGIYAWLPLGLRVLNKIEQIVREEMDRAGAIELLMPTIQLADLWRESGRYDDYGDEMLRITDRHKRELLFGPTAEEVVTDIFRASIKSYKDLPKNLYNIQWKFRDERRPRFGVMRGREFLMKDAYSFDLDADGARKSYNRMFVAYLNLFARMGLKAVPMRADTGPIGGDLSHEFIVLAETGESAVFCHKDLVEMPAPGPDLDWINGDLQPLVNQRTALYAATEEMHDEAAFNALPEGDRLSARGIEVGHIFSFGTKYSEPMKATVQGPDGQQVPVQMGSYGVGVSRLLGAIIEASHDEGGIIWPESVAPFDVGIVNMRQGDAACDAACETAYNALKAAGREVLYDDTDARGGAKFATMDLIGLPWQLIVGPKGIAEGVVEIKHRKTGERHTASLESVLDGLTKSKTT.

It belongs to the class-II aminoacyl-tRNA synthetase family. ProS type 2 subfamily. Homodimer.

The protein localises to the cytoplasm. The catalysed reaction is tRNA(Pro) + L-proline + ATP = L-prolyl-tRNA(Pro) + AMP + diphosphate. Functionally, catalyzes the attachment of proline to tRNA(Pro) in a two-step reaction: proline is first activated by ATP to form Pro-AMP and then transferred to the acceptor end of tRNA(Pro). The polypeptide is Proline--tRNA ligase (Caulobacter vibrioides (strain ATCC 19089 / CIP 103742 / CB 15) (Caulobacter crescentus)).